The chain runs to 1748 residues: MARAWQHPFLNVFRHFRVDEWKRSAKQGDVAVVTDKTLKGAVYRIRGSVSAANYIQLPKSSTQSLGLTGRYLYVLFRPLPSKHFVIHLDVSSKDNQVIRVSFSNLFKEFKSTATWLQFPLVLEARTPQRDLVGLAPSGARWTCLQLDLQDVLLVYLNRCYGHLKSIRLCASLLVRNLYTSDLCFEPAISGAQWAKLPVTPMPREMAFPVPKGESWHDRYIHVRFPSESLKVPSKPIEKSCSPPEAVLLGPGPQPLPCPVASSKPVRFSVSPVVQTPSPTASGRAALAPRPFPEVSLSQERSDASNADGPGFHSLEPWAQLEASDIHTAAAGTHVLTHESAEVPVARTGSCEGFLPDPVLRLKGVIGFGGHGTRQALWTPDGAAVVYPCHAVIVVLLVDTGEQRFFLGHTDKVSALALDGSSSLLASAQARAPSVMRLWDFQTGRCLCLFRSPMHVVCSLSFSDSGALLCGVGKDHHGRTMVVAWGTGQVGLGGEVVVLAKAHTDFDVQAFRVTFFDETRMASCGQGSVRLWRLRGGVLRSCPVDLGEHHALQFTDLAFKQARDGCPEPSAAMLFVCSRSGHILEIDCQRMVVRHARRLLPTRTPGGPHPQKQTFSSGPGIAISSLSVSPAMCAVGSEDGFLRLWPLDFSSVLLEAEHEGPVSSVCVSPDGLRVLSATSSGHLGFLDTLSRVYHMLARSHTAPVLALAMEQRRGQLATVSQDRTVRIWDLATLQQLYDFTSSEDAPCAVTFHPTRPTFFCGFSSGAVRSFSLEAAEVLVEHTCHRGAVTGLTATPDGRLLFSSCSQGSLAQYSCADPQWHVLRVAADMVCPDAPASPSALAVSRDGRLLAFVGPSRCTVTVMGSASLDELLRVDIGTLDLASSRLDSAMAVCFGPAALGHLLVSTSSNRVVVLDAVSGRIIRELPGVHPEPCPSLTLSEDARFLLIAAGRTIKVWDYATQASPGPQVYIGHSEPVQAVAFSPDQQQVLSAGDAVFLWDVLAPTESDQSFPGAPPACKTGPGAGPLEDAASRASELPRQQVPKPCQASPPRLGVCARPPEGGDGARDTRNSGAPRTTYLASCKAFTPARVSCSPHSAKGTCPPPASGGWLRLKAVVGYSGNGRANMVWRPDTGFFAYTCGRLVVVEDLHSGAQQHWSGHSAEISTLALSHSAQVLASASGRSSTTAHCQIRVWDVSGGLCQHLIFPHSTTVLALAFSPDDRLLVTLGDHDGRTLALWGTATYDLVSSTRLPEPVHGVAFNPWDAGELTCVGQGTVTFWLLQQRGADISLQVRREPVPEAVGAGELTSLCYGAPPLLYCGTSSGQVCVWDTRAGRCFLSWEADDGGIGLLLFSGSRLVSGSSTGRLRLWAVGAVSELRCKGSGASSVFMEHELVLDGAVVSASFDDSVDMGVVGTTAGTLWFVSWAEGTSTRLISGHRSKVNEVVFSPGESHCATCSEDGSVRVWALASMELVIQFQVLNQSCLCLAWSPPCCGRPEQQRLAAGYGDGSLRIFSVSRTAMELKMHPHPVALTTVAFSTDGQTVLSGDKDGLVAVSHPCTGTTFRVLSDHQGAPISTICVTCKECEDLGVEGTDLWLAASGDQRVSVWASDWLRNHCELVDWLSFPMPATTETQGHLPPSLAAFCPWDGALLMYVGPGVYKEVIIYNLCQKQVVEKIPLPFFAMSLSLSPGTHLLAVGFAECMLRLVDCAMGTAQDFAGHDNAVHLCRFTPSARLLFTAARNEILVWEVPGL.

The binds with microtubules stretch occupies residues 1 to 207 (MARAWQHPFL…VTPMPREMAF (207 aa)). Residue S241 is modified to Phosphoserine. Positions 274-308 (QTPSPTASGRAALAPRPFPEVSLSQERSDASNADG) are disordered. WD repeat units follow at residues 407–450 (GHTD…CLFR), 452–494 (PMHV…LGGE), 501–541 (AHTD…LRSC), 615–654 (SSGPGIAISSLSVSPAMCAVGSEDGFLRLWPLDFSSVLLE), 656–695 (EHEGPVSSVCVSPDGLRVLSATSSGHLGFLDTLSRVYHML), 698–737 (SHTAPVLALAMEQRRGQLATVSQDRTVRIWDLATLQQLYD), 740–779 (SSEDAPCAVTFHPTRPTFFCGFSSGAVRSFSLEAAEVLVE), 782–821 (CHRGAVTGLTATPDGRLLFSSCSQGSLAQYSCADPQWHVL), 882–922 (SRLD…IIRE), 926–964 (VHPEPCPSLTLSEDARFLLIAAGRTIKVWDYATQASPGP), 969–1009 (GHSE…QSFP), 1156–1201 (GHSA…CQHL), 1204–1245 (PHST…LVSS), 1247–1286 (RLPEPVHGVAFNPWDAGELTCVGQGTVTFWLLQQRGADIS), 1298–1326 (VGAGELTSLCYGAPPLLYCGTSSGQVCVW), 1327–1376 (DTRA…ELRC), 1433–1472 (GHRSKVNEVVFSPGESHCATCSEDGSVRVWALASMELVIQ), 1475–1520 (VLNQ…MELK), 1523–1562 (PHPVALTTVAFSTDGQTVLSGDKDGLVAVSHPCTGTTFRV), 1568–1614 (GAPI…NHCE), and 1715–1748 (GHDNAVHLCRFTPSARLLFTAARNEILVWEVPGL). The disordered stretch occupies residues 1004–1071 (SDQSFPGAPP…GARDTRNSGA (68 aa)).

Belongs to the WD repeat WDR90/POC16 family.

Its subcellular location is the cytoplasm. The protein resides in the cytoskeleton. It localises to the microtubule organizing center. It is found in the centrosome. The protein localises to the centriole. Its subcellular location is the centriolar satellite. Its function is as follows. Microtubule-binding protein that plays a crucial role in ensuring inner core protein localization within the centriole core, as well as in maintaining the microtubule wall integrity and the overall centriole roundness and stability. Required for efficient primary cilium formation. This chain is WD repeat-containing protein 90 (WDR90), found in Homo sapiens (Human).